The following is a 445-amino-acid chain: RING finger and transmembrane domain-containing protein 2 (445 aa).

Residues 1–183 (MWLLAAHQVL…LLAKLCFQHK (183 aa)) lie on the Extracellular side of the membrane. Residues 12-41 (KMQRRHSSNTDNIPPERSRSQALSPEASVD) are disordered. The chain crosses the membrane as a helical span at residues 184 to 203 (LGIAVCIGMASTFAYANSTL). The Cytoplasmic segment spans residues 204 to 215 (REQVSLKEKRSV). Residues 216–236 (LVILWILAFLAGNTMYVLYTF) traverse the membrane as a helical segment. Over 237 to 256 (SSQQLYSSLIFLKPNLETLD) the chain is Extracellular. The chain crosses the membrane as a helical span at residues 257-277 (FFDLLWIVGIADFVLKYITIA). Over 278–330 (LKCLIVALPKIILAVKSKGKFYLVIEELSQLFRSLVPIQLWYKYIMGDDSSNS) the chain is Cytoplasmic. Residues 331-351 (YFLGGVLIVLYSLCKSFDICG) form a helical membrane-spanning segment. Residues 352–445 (RVGGLRKALK…GATSAHLQVY (94 aa)) lie on the Extracellular side of the membrane. An RING-type zinc finger spans residues 385–423 (CAICQAEFRDPMILLCQHVFCEECLCLWLDRERTCPLCR).

It localises to the membrane. In terms of biological role, E3 ubiquitin-protein ligase that negatively regulates IL3-dependent cellular responses through IL3RA ubiquitination and degradation by the proteasome, having an anti-inflammatory effect. The polypeptide is RING finger and transmembrane domain-containing protein 2 (Rnft2) (Mus musculus (Mouse)).